A 493-amino-acid polypeptide reads, in one-letter code: Transcription termination factor MTERF5, chloroplastic (493 aa).

A chloroplast-targeting transit peptide spans 1–43 (MQSLSQLGPSEIFLVARREKPSTRAQLWFTGRLSFRQETNGIR).

This sequence belongs to the mTERF family. As to quaternary structure, interacts with pTAC6. In terms of tissue distribution, expressed in roots, rosette leaves, cauline leaves, stems, flower buds and open flowers.

The protein resides in the plastid. It is found in the chloroplast. Its function is as follows. Transcription termination factor required for processing and steady-state levels of plastid transcripts. Involved also in chloroplast transcriptional pausing, a general feature of chloroplast genes. Specifically and positively regulates the transcription of chloroplast psbEFLJ encoding for photosystem II (PSII) core subunits psbE, psbF, psbL and psbJ; causes the plastid-encoded RNA polymerase (PEP) complex to pause at psbEFLJ by binding to the +30 to +51 region of double-stranded DNA, and recruits additional pTAC6 to the transcriptionally paused region of psbEFLJ. May play a role in response to abiotic stresses. This Arabidopsis thaliana (Mouse-ear cress) protein is Transcription termination factor MTERF5, chloroplastic.